A 332-amino-acid chain; its full sequence is 2,3-diketo-L-gulonate reductase (332 aa).

Catalysis depends on His-44, which acts as the Proton donor. NAD(+) is bound by residues 168-174, 224-225, and 304-306; these read ITMVDMS, WK, and GHE.

This sequence belongs to the LDH2/MDH2 oxidoreductase family. DlgD subfamily. As to quaternary structure, homodimer.

It is found in the cytoplasm. The enzyme catalyses 3-dehydro-L-gulonate + NAD(+) = 2,3-dioxo-L-gulonate + NADH + H(+). It catalyses the reaction 3-dehydro-L-gulonate + NADP(+) = 2,3-dioxo-L-gulonate + NADPH + H(+). Catalyzes the reduction of 2,3-diketo-L-gulonate in the presence of NADH, to form 3-keto-L-gulonate. The polypeptide is 2,3-diketo-L-gulonate reductase (Salmonella agona (strain SL483)).